Consider the following 191-residue polypeptide: Guanylate kinase (191 aa).

In terms of domain architecture, Guanylate kinase-like spans 10–188; it reads GQLIVLTGPS…ALHRLVKLIG (179 aa). Position 17-24 (17-24) interacts with ATP; that stretch reads GPSGVGKG.

The protein belongs to the guanylate kinase family.

It localises to the cytoplasm. It carries out the reaction GMP + ATP = GDP + ADP. In terms of biological role, essential for recycling GMP and indirectly, cGMP. The sequence is that of Guanylate kinase (gmk) from Synechocystis sp. (strain ATCC 27184 / PCC 6803 / Kazusa).